A 547-amino-acid polypeptide reads, in one-letter code: NADH-ubiquinone oxidoreductase chain 5 (547 aa).

Helical transmembrane passes span 3–23, 45–65, 80–100, 101–121, 132–152, 198–218, 227–247, 264–284, 319–339, 352–372, 399–419, 430–450, 460–477, 485–505, and 512–532; these read ISIF…IFFV, YFNS…VLVF, YFML…SGCF, SMLV…LFYN, TVLT…STIF, ISSL…IMNF, VIMI…MAAL, MGFS…IHLL, VPYF…GLVF, FFFS…SVFL, VVMN…IWWM, FLYV…VVGF, FVYK…VYGL, LFLG…GFWS, and LYFN…WGCI.

This sequence belongs to the complex I subunit 5 family.

The protein localises to the mitochondrion inner membrane. It catalyses the reaction a ubiquinone + NADH + 5 H(+)(in) = a ubiquinol + NAD(+) + 4 H(+)(out). Core subunit of the mitochondrial membrane respiratory chain NADH dehydrogenase (Complex I) that is believed to belong to the minimal assembly required for catalysis. Complex I functions in the transfer of electrons from NADH to the respiratory chain. The immediate electron acceptor for the enzyme is believed to be ubiquinone. In Ascaris suum (Pig roundworm), this protein is NADH-ubiquinone oxidoreductase chain 5 (ND5).